The primary structure comprises 210 residues: DNA-directed RNA polymerase III subunit rpc31 (210 aa).

S103 carries the phosphoserine modification. Residues 151–210 form a disordered region; that stretch reads KDESSEAAHPNIEEEPDEGLEEEDEDFGDDDDNDYGENYFDNGEGDDYDDYDGDEGAIYE. Composition is skewed to acidic residues over residues 163–185 and 193–210; these read EEEP…DNDY and GEGD…AIYE.

It belongs to the eukaryotic RPC7 RNA polymerase subunit family. In terms of assembly, component of the RNA polymerase III (Pol III) complex.

The protein resides in the cytoplasm. It is found in the nucleus. Functionally, DNA-dependent RNA polymerase catalyzes the transcription of DNA into RNA using the four ribonucleoside triphosphates as substrates. Specific peripheric component of RNA polymerase III which synthesizes small RNAs, such as 5S rRNA and tRNAs. The polypeptide is DNA-directed RNA polymerase III subunit rpc31 (rpc31) (Schizosaccharomyces pombe (strain 972 / ATCC 24843) (Fission yeast)).